Reading from the N-terminus, the 119-residue chain is DNA-binding protein Maeo_0998 (119 aa).

Residues methionine 1–methionine 11 show a composition bias toward basic and acidic residues. The disordered stretch occupies residues methionine 1–arginine 36. Low complexity predominate over residues glutamine 15–glutamine 32.

Belongs to the PDCD5 family.

This chain is DNA-binding protein Maeo_0998, found in Methanococcus aeolicus (strain ATCC BAA-1280 / DSM 17508 / OCM 812 / Nankai-3).